An 870-amino-acid polypeptide reads, in one-letter code: Serine protease DegP homolog (870 aa).

Positions 1-29 are cleaved as a signal peptide; that stretch reads MDIIFCTPTYCKIMLMIIMLISLRTRCDT. A disordered region spans residues 128–151; it reads KNPLNDNFKNPKLRKHSPNNKKNK. Positions 138-151 are enriched in basic residues; sequence PKLRKHSPNNKKNK. Residues H328, D359, and S437 each act as charge relay system in the active site.

This sequence belongs to the peptidase S1C family. In terms of assembly, oligomer; may form trimers or hexamers. Forms a complex at least composed of DegP, ENO and HSP70.

It localises to the cytoplasm. Its subcellular location is the parasitophorous vacuole. The protein resides in the host cell membrane. The protein localises to the host cytoplasm. Serine protease which also acts as a protein chaperone. Plays a role in the parasite development in host erythrocytes possibly by protecting it against thermal and oxidative stresses. In Plasmodium falciparum (isolate 3D7), this protein is Serine protease DegP homolog.